The sequence spans 92 residues: Cell division topological specificity factor (92 aa).

The protein belongs to the MinE family.

Functionally, prevents the cell division inhibition by proteins MinC and MinD at internal division sites while permitting inhibition at polar sites. This ensures cell division at the proper site by restricting the formation of a division septum at the midpoint of the long axis of the cell. The chain is Cell division topological specificity factor from Symbiobacterium thermophilum (strain DSM 24528 / JCM 14929 / IAM 14863 / T).